The following is a 215-amino-acid chain: Phosphoribosylglycinamide formyltransferase (215 aa).

Residues Arg-74, 99–102 (MRIL), and Asn-116 each bind (6R)-10-formyltetrahydrofolate. Catalysis depends on His-118, which acts as the Proton donor.

It belongs to the GART family.

It carries out the reaction N(1)-(5-phospho-beta-D-ribosyl)glycinamide + (6R)-10-formyltetrahydrofolate = N(2)-formyl-N(1)-(5-phospho-beta-D-ribosyl)glycinamide + (6S)-5,6,7,8-tetrahydrofolate + H(+). Its pathway is purine metabolism; IMP biosynthesis via de novo pathway; N(2)-formyl-N(1)-(5-phospho-D-ribosyl)glycinamide from N(1)-(5-phospho-D-ribosyl)glycinamide (10-formyl THF route): step 1/1. Functionally, catalyzes the transfer of a formyl group from 10-formyltetrahydrofolate to 5-phospho-ribosyl-glycinamide (GAR), producing 5-phospho-ribosyl-N-formylglycinamide (FGAR) and tetrahydrofolate. The protein is Phosphoribosylglycinamide formyltransferase of Mycobacterium tuberculosis (strain CDC 1551 / Oshkosh).